The sequence spans 410 residues: Benzene 1,2-dioxygenase system ferredoxin--NAD(+) reductase subunit (410 aa).

An FAD-binding site is contributed by 4 to 35 (HVAIIGNGVAGFTTAQALRAEGYEGRISLIGE). 145–173 (RLLIVGGGLIGCEVATTARKLGLSVTILE) contributes to the NAD(+) binding site.

It belongs to the bacterial ring-hydroxylating dioxygenase ferredoxin reductase family. As to quaternary structure, this dioxygenase system consists of four proteins: the two subunits of the hydroxylase component (BedC1 and BedC2), a ferredoxin (BedB) and a ferredoxin reductase (BedA). Requires FAD as cofactor.

The catalysed reaction is 2 reduced [2Fe-2S]-[ferredoxin] + NAD(+) + H(+) = 2 oxidized [2Fe-2S]-[ferredoxin] + NADH. The protein operates within aromatic compound metabolism; benzene degradation; catechol from benzene: step 1/2. Functionally, part of the electron transfer component of benzene 1,2-dioxygenase, transfers electrons from ferredoxin to NADH. In Pseudomonas putida (Arthrobacter siderocapsulatus), this protein is Benzene 1,2-dioxygenase system ferredoxin--NAD(+) reductase subunit (bedA).